Reading from the N-terminus, the 81-residue chain is Exodeoxyribonuclease 7 small subunit (81 aa).

This sequence belongs to the XseB family. As to quaternary structure, heterooligomer composed of large and small subunits.

The protein resides in the cytoplasm. It carries out the reaction Exonucleolytic cleavage in either 5'- to 3'- or 3'- to 5'-direction to yield nucleoside 5'-phosphates.. Its function is as follows. Bidirectionally degrades single-stranded DNA into large acid-insoluble oligonucleotides, which are then degraded further into small acid-soluble oligonucleotides. This is Exodeoxyribonuclease 7 small subunit from Pasteurella multocida (strain Pm70).